Here is a 314-residue protein sequence, read N- to C-terminus: Homoserine kinase (314 aa).

95 to 105 (PHSRGLGSSAS) is a binding site for ATP.

It belongs to the GHMP kinase family. Homoserine kinase subfamily.

Its subcellular location is the cytoplasm. The enzyme catalyses L-homoserine + ATP = O-phospho-L-homoserine + ADP + H(+). It functions in the pathway amino-acid biosynthesis; L-threonine biosynthesis; L-threonine from L-aspartate: step 4/5. Catalyzes the ATP-dependent phosphorylation of L-homoserine to L-homoserine phosphate. This chain is Homoserine kinase, found in Rhodococcus opacus (strain B4).